The sequence spans 148 residues: Trypsin inhibitor CMe (148 aa).

The signal sequence occupies residues 1-24 (MAFKYQLLLSAAVMLAILVATATS).

This sequence belongs to the protease inhibitor I6 (cereal trypsin/alpha-amylase inhibitor) family. Post-translationally, five disulfide bonds, which are essential for the inhibitor activity, are probably present. Expressed in the developing endosperm. Not detected in embryo, aleurone, coleoptile, roots and leaves.

Its subcellular location is the secreted. Functionally, inhibits trypsin in vitro. Probably plays a protective role through inhibition of insect midgut proteases. This is Trypsin inhibitor CMe (ITR1) from Hordeum vulgare (Barley).